A 715-amino-acid chain; its full sequence is MIYQGKAITVKPLEGGIVELNFDLKGESVNKFNRLTLSELRAAVDAIKADAAVKGVIVTSGKDVFIVGADITEFVDNFQLPDEELMAGNLEANKIFSDFEDLDVPTVAAINGIALGGGLEMCLAADFRVMSATAKVGLPEVKLGIYPGFGGTVRLPRLIGCDNAVEWIASGKENKAEDALKVGAVDAVVAPEQLQAAALDLAKRAVAGELDHKARRQPKLEKLKLNAIEQMMAFETAKGFVAGQAGPNYPAPVEAIKSIQKAANFGRDKALEVEAAGFVKLAKTSVAQSLIGLFLNDQELKKKAKKYDEVAKDVKLAAVLGAGIMGGGIAYQSALKGTPILMKDIREEGIQMGLNEAAKLLGKRVEKGRLTPAKMAEALNGIRPTMSYGDFGNVDIVVEAVVENPKVKQAVLAEVEGAVKEDAIIASNTSTISISLLAQALKRPENFCGMHFFNPVHMMPLVEVIRGEKTGETAIATTVAYAKKMGKSPIVVNDCPGFLVNRVLFPYFGGFAKLLGFGVDFVRIDKVMEKFGWPMGPAYLSDVVGIDTGHHGRDVMAEGFPDRMAVEGKTAVDVMYEANRLGQKNGKGFYAYETDKRGKPKKVTDPQAYEVLKPIVVEQREVTDEDIVNFMMIPLCLETVRCLEDGIVETAAEADMGLIYGIGFPPFRGGALRYIDSIGVAEFVALADKYAELGALYHPTAKLREMAKNGQKFFG.

Residues 1–190 (MIYQGKAITV…KVGAVDAVVA (190 aa)) form an enoyl-CoA hydratase/isomerase region. D297 is a substrate binding site. The 3-hydroxyacyl-CoA dehydrogenase stretch occupies residues 312-715 (KDVKLAAVLG…MAKNGQKFFG (404 aa)). Residues M325, D344, 401–403 (VVE), K408, and S430 each bind NAD(+). H451 functions as the For 3-hydroxyacyl-CoA dehydrogenase activity in the catalytic mechanism. N454 lines the NAD(+) pocket. Residues N501 and Y660 each coordinate substrate.

It in the N-terminal section; belongs to the enoyl-CoA hydratase/isomerase family. This sequence in the C-terminal section; belongs to the 3-hydroxyacyl-CoA dehydrogenase family. In terms of assembly, heterotetramer of two alpha chains (FadB) and two beta chains (FadA).

It catalyses the reaction a (3S)-3-hydroxyacyl-CoA + NAD(+) = a 3-oxoacyl-CoA + NADH + H(+). The catalysed reaction is a (3S)-3-hydroxyacyl-CoA = a (2E)-enoyl-CoA + H2O. The enzyme catalyses a 4-saturated-(3S)-3-hydroxyacyl-CoA = a (3E)-enoyl-CoA + H2O. It carries out the reaction (3S)-3-hydroxybutanoyl-CoA = (3R)-3-hydroxybutanoyl-CoA. It catalyses the reaction a (3Z)-enoyl-CoA = a 4-saturated (2E)-enoyl-CoA. The catalysed reaction is a (3E)-enoyl-CoA = a 4-saturated (2E)-enoyl-CoA. The protein operates within lipid metabolism; fatty acid beta-oxidation. Involved in the aerobic and anaerobic degradation of long-chain fatty acids via beta-oxidation cycle. Catalyzes the formation of 3-oxoacyl-CoA from enoyl-CoA via L-3-hydroxyacyl-CoA. It can also use D-3-hydroxyacyl-CoA and cis-3-enoyl-CoA as substrate. The sequence is that of Fatty acid oxidation complex subunit alpha from Pseudomonas paraeruginosa (strain DSM 24068 / PA7) (Pseudomonas aeruginosa (strain PA7)).